Reading from the N-terminus, the 194-residue chain is HTH-type transcriptional regulator BetI (194 aa).

The HTH tetR-type domain maps to 8–68 (PLRRRELIDA…ATMRHLLREL (61 aa)). The segment at residues 31-50 (TVAQIAHEAGVSPALAHHYF) is a DNA-binding region (H-T-H motif).

Its pathway is amine and polyamine biosynthesis; betaine biosynthesis via choline pathway [regulation]. Functionally, repressor involved in the biosynthesis of the osmoprotectant glycine betaine. It represses transcription of the choline transporter BetT and the genes of BetAB involved in the synthesis of glycine betaine. The sequence is that of HTH-type transcriptional regulator BetI from Brucella anthropi (strain ATCC 49188 / DSM 6882 / CCUG 24695 / JCM 21032 / LMG 3331 / NBRC 15819 / NCTC 12168 / Alc 37) (Ochrobactrum anthropi).